The sequence spans 244 residues: Phosphoadenosine 5'-phosphosulfate reductase (244 aa).

Residue Cys-239 is the Nucleophile; cysteine thiosulfonate intermediate of the active site.

This sequence belongs to the PAPS reductase family. CysH subfamily.

Its subcellular location is the cytoplasm. It catalyses the reaction [thioredoxin]-disulfide + sulfite + adenosine 3',5'-bisphosphate + 2 H(+) = [thioredoxin]-dithiol + 3'-phosphoadenylyl sulfate. It participates in sulfur metabolism; hydrogen sulfide biosynthesis; sulfite from sulfate: step 3/3. Its function is as follows. Catalyzes the formation of sulfite from phosphoadenosine 5'-phosphosulfate (PAPS) using thioredoxin as an electron donor. The protein is Phosphoadenosine 5'-phosphosulfate reductase of Salmonella paratyphi A (strain AKU_12601).